A 381-amino-acid chain; its full sequence is Deoxyguanosinetriphosphate triphosphohydrolase-like protein (381 aa).

Residues 76–203 (RMTHTLEVAG…ADLSDEIAYT (128 aa)) enclose the HD domain.

Belongs to the dGTPase family. Type 2 subfamily.

In Leptospira borgpetersenii serovar Hardjo-bovis (strain JB197), this protein is Deoxyguanosinetriphosphate triphosphohydrolase-like protein.